We begin with the raw amino-acid sequence, 514 residues long: Tumor necrosis factor receptor superfamily member EDAR (514 aa).

An N-terminal signal peptide occupies residues 1 to 27 (MKMWKRRGQKKSMFLSSLLVCCMFASA). Over 28–183 (EYSSCGEYEF…SPGQGHLATA (156 aa)) the chain is Extracellular. 3 TNFR-Cys repeats span residues 31 to 72 (SCGE…GFAC), 74 to 114 (PCPQ…DAEC), and 116 to 149 (PCLP…TKEC). Disulfide bonds link Cys32–Cys45, Cys48–Cys61, Cys51–Cys72, Cys75–Cys88, Cys94–Cys114, Cys117–Cys136, and Cys139–Cys149. 2 N-linked (GlcNAc...) asparagine glycosylation sites follow: Asn39 and Asn58. A helical membrane pass occupies residues 184–204 (LIIAMSTIFIMAIAIVLIIMF). Residues 205-514 (YILKAKPNGQ…TSPSPRCASV (310 aa)) are Cytoplasmic-facing. Positions 254-294 (LKASPQKTVKSENDASSENEQLLSRSIDSDEEPTSDKLRSS) are disordered. Residues 267–279 (DASSENEQLLSRS) are compositionally biased toward polar residues. A Death domain is found at 403 to 476 (RMLSSSYSSD…DAVESLCADV (74 aa)).

The protein resides in the membrane. Receptor for EDA. May mediate the activation of NF-kappa-B and JNK. This is Tumor necrosis factor receptor superfamily member EDAR (edar) from Oryzias latipes (Japanese rice fish).